Here is a 30-residue protein sequence, read N- to C-terminus: Cysteine-rich venom protein hematin (30 aa).

Belongs to the CRISP family. Contains 8 disulfide bonds. In terms of tissue distribution, expressed by the venom gland.

It localises to the secreted. Inhibits calcium-activated potassium channels (KCa), voltage-gated potassium channel (Kv), and the calcium release channel/ryanodine receptor (RyR). The sequence is that of Cysteine-rich venom protein hematin from Hemachatus haemachatus (Rinkhals).